The following is a 263-amino-acid chain: Putative hydro-lyase Pden_0321 (263 aa).

It belongs to the D-glutamate cyclase family.

The chain is Putative hydro-lyase Pden_0321 from Paracoccus denitrificans (strain Pd 1222).